Reading from the N-terminus, the 2923-residue chain is Cadherin EGF LAG seven-pass G-type receptor 2 (2923 aa).

The N-terminal stretch at 1 to 31 (MRSPATGVPLPTPPPPLLLLLLLLLPPPLLG) is a signal peptide. At 32 to 2380 (DQVGPCRSLG…GEILPLKTLT (2349 aa)) the chain is on the extracellular side. The tract at residues 154–198 (PGLRAGERSPEESLGGRRKRNVNTAPQFQPPSYQATVPENQPAGT) is disordered. The span at 158–168 (AGERSPEESLG) shows a compositional bias: basic and acidic residues. The segment covering 175–196 (VNTAPQFQPPSYQATVPENQPA) has biased composition (polar residues). Cadherin domains lie at 182–289 (QPPS…DPVF), 290–399 (EQQE…APQF), 400–505 (SEKR…APIF), 506–610 (VSTP…NPTF), 611–712 (TQPE…RPVF), 713–815 (QSSH…APQF), 816–921 (LRDS…PPVF), 922–1023 (EQDE…PPVL), and 1028–1146 (ILFN…SPLL). Asparagine 486, asparagine 557, and asparagine 701 each carry an N-linked (GlcNAc...) asparagine glycan. Residues asparagine 1036, asparagine 1076, asparagine 1182, and asparagine 1212 are each glycosylated (N-linked (GlcNAc...) asparagine). Residues 1228–1286 (DDNICLREPCENYMRCVSVLRFDSSAPFIASSSVLFRPIHPVGGLRCRCPPGFTGDYCE) form the EGF-like 1; calcium-binding domain. Cystine bridges form between cysteine 1232-cysteine 1243, cysteine 1237-cysteine 1274, cysteine 1276-cysteine 1285, cysteine 1292-cysteine 1303, cysteine 1297-cysteine 1312, cysteine 1314-cysteine 1323, cysteine 1332-cysteine 1343, cysteine 1337-cysteine 1353, and cysteine 1355-cysteine 1365. An EGF-like 2; calcium-binding domain is found at 1288–1324 (EVDLCYSRPCGPHGRCRSREGGYTCLCRDGYTGEHCE). Positions 1328–1366 (RSGRCTPGVCKNGGTCVNLLVGGFKCDCPSGDFEKPYCQ) constitute an EGF-like 3; calcium-binding domain. One can recognise a Laminin G-like 1 domain in the interval 1367 to 1571 (VTTRSFPAHS…IANNGTVPGC (205 aa)). Asparagine 1501 and asparagine 1565 each carry an N-linked (GlcNAc...) asparagine glycan. 4 disulfides stabilise this stretch: cysteine 1545-cysteine 1571, cysteine 1578-cysteine 1589, cysteine 1583-cysteine 1598, and cysteine 1600-cysteine 1609. One can recognise an EGF-like 4; calcium-binding domain in the interval 1574–1610 (KKNVCDSNTCHNGGTCVNQWDAFSCECPLGFGGKSCA). Asparagine 1591 is subject to (3R)-3-hydroxyasparagine. Positions 1614–1791 (ANPQHFLGSS…GESINVEQGC (178 aa)) constitute a Laminin G-like 2 domain. An N-linked (GlcNAc...) asparagine glycan is attached at asparagine 1741. 14 disulfides stabilise this stretch: cysteine 1761/cysteine 1791, cysteine 1797/cysteine 1808, cysteine 1802/cysteine 1817, cysteine 1819/cysteine 1828, cysteine 1832/cysteine 1843, cysteine 1837/cysteine 1855, cysteine 1857/cysteine 1866, cysteine 1887/cysteine 1899, cysteine 1889/cysteine 1906, cysteine 1908/cysteine 1921, cysteine 1924/cysteine 1936, cysteine 1926/cysteine 1943, cysteine 1945/cysteine 1954, and cysteine 1957/cysteine 1969. The region spanning 1793–1828 (LPDPCDSNPCPANSYCSNDWDSYSCSCDPGYYGDNC) is the EGF-like 5; calcium-binding domain. Asparagine 1810 carries the (3R)-3-hydroxyasparagine modification. The N-linked (GlcNAc...) asparagine glycan is linked to asparagine 1827. One can recognise an EGF-like 6; calcium-binding domain in the interval 1829 to 1867 (TNVCDLNPCEHQSVCTRKPSAPHGYTCECPPNYLGPYCE). The 40-residue stretch at 1883 to 1922 (TCGPCNCDVSKGFDPDCNKTSGECHCKENHYRPPGSPTCL) folds into the EGF-like 7; calcium-binding domain. A glycan (N-linked (GlcNAc...) asparagine) is linked at asparagine 1900. Positions 1924 to 1971 (CDCYPTGSLSRVCDPEDGQCPCKPGVIGRQCDRCDNPFAEVTTNGCEV) constitute a Laminin EGF-like domain. Asparagine 2024, asparagine 2043, and asparagine 2061 each carry an N-linked (GlcNAc...) asparagine glycan. Residues 2199 to 2369 (ETTVILPESV…AVLMDVSRRE (171 aa)) enclose the GAIN-B domain. The disordered stretch occupies residues 2213–2238 (PPVVRPAGPGEAQEPEELARRQRRHP). Disulfide bonds link cysteine 2319–cysteine 2351 and cysteine 2339–cysteine 2353. Positions 2319-2369 (CVFWNHSILVSGTGGWSARGCEVVFRNESHVSCQCNHMTSFAVLMDVSRRE) are GPS. N-linked (GlcNAc...) asparagine glycosylation is found at asparagine 2323 and asparagine 2345. Residues 2381 to 2401 (YVALGVTLAALLLTFFFLTLL) traverse the membrane as a helical segment. At 2402–2416 (RILRSNQHGIRRNLT) the chain is on the cytoplasmic side. The chain crosses the membrane as a helical span at residues 2417-2437 (AALGLAQLVFLLGINQADLPF). Residue alanine 2438 is a topological domain, extracellular. Residues 2439-2459 (CTVIAILLHFLYLCTFSWALL) traverse the membrane as a helical segment. Residues 2460 to 2480 (EALHLYRALTEVRDVNTGPMR) are Cytoplasmic-facing. Residues 2481–2501 (FYYMLGWGVPAFITGLAVGLD) traverse the membrane as a helical segment. The Extracellular portion of the chain corresponds to 2502-2519 (PEGYGNPDFCWLSIYDTL). Residues 2520–2540 (IWSFAGPVAFAVSMSVFLYIL) traverse the membrane as a helical segment. Residues 2541–2560 (AARASCAAQRQGFEKKGPVS) lie on the Cytoplasmic side of the membrane. The chain crosses the membrane as a helical span at residues 2561-2581 (GLQPSFAVLLLLSATWLLALL). The Extracellular segment spans residues 2582–2591 (SVNSDTLLFH). A helical transmembrane segment spans residues 2592 to 2612 (YLFATCNCIQGPFIFLSYVVL). Residues 2613–2923 (SKEVRKALKL…SEFLFFNFLH (311 aa)) are Cytoplasmic-facing. 2 disordered regions span residues 2688–2838 (SALN…HKGI) and 2854–2888 (LRLP…RQSL). 2 stretches are compositionally biased toward acidic residues: residues 2718–2730 (TDSD…EDDQ) and 2742–2753 (SEEEEEEEEEEA). Basic and acidic residues predominate over residues 2807 to 2819 (PEERLRENGDALS). Residues 2863–2873 (GSSRGSSASEG) show a composition bias toward low complexity.

Belongs to the G-protein coupled receptor 2 family. LN-TM7 subfamily. Heterodimer of 2 chains generated by proteolytic processing; the large extracellular N-terminal fragment and the membrane-bound C-terminal fragment predominantly remain associated and non-covalently linked. The iron and 2-oxoglutarate dependent 3-hydroxylation of aspartate and asparagine is (R) stereospecific within EGF domains. Post-translationally, autoproteolytically processed at the GPS region of the GAIN-B domain; this cleavage modulates receptor activity. As to expression, highest expression in brain and testis.

It is found in the cell membrane. Receptor that may have an important role in cell/cell signaling during nervous system formation. In Homo sapiens (Human), this protein is Cadherin EGF LAG seven-pass G-type receptor 2.